We begin with the raw amino-acid sequence, 147 residues long: Histone H2B (147 aa).

Residues 1–31 (MAPKAEKKPAEKKPAEEKKAVAEKAPAEKKP) show a composition bias toward basic and acidic residues. The tract at residues 1 to 55 (MAPKAEKKPAEKKPAEEKKAVAEKAPAEKKPKAGKKLPKEGGAAAGDKKKKRVKK) is disordered. N6-acetyllysine is present on residues K7, K35, and K36. K143 participates in a covalent cross-link: Glycyl lysine isopeptide (Lys-Gly) (interchain with G-Cter in ubiquitin).

Belongs to the histone H2B family. As to quaternary structure, the nucleosome is a histone octamer containing two molecules each of H2A, H2B, H3 and H4 assembled in one H3-H4 heterotetramer and two H2A-H2B heterodimers. The octamer wraps approximately 147 bp of DNA. In terms of processing, can be acetylated to form H2BK6ac, H2BK33ac and H2BK34ac. Post-translationally, monoubiquitinated to form H2BK143ub1; may give a specific tag for epigenetic transcriptional activation.

The protein resides in the nucleus. It is found in the chromosome. Functionally, core component of nucleosome. Nucleosomes wrap and compact DNA into chromatin, limiting DNA accessibility to the cellular machineries which require DNA as a template. Histones thereby play a central role in transcription regulation, DNA repair, DNA replication and chromosomal stability. DNA accessibility is regulated via a complex set of post-translational modifications of histones, also called histone code, and nucleosome remodeling. The chain is Histone H2B (HIS2B) from Gossypium hirsutum (Upland cotton).